The following is a 118-amino-acid chain: Large ribosomal subunit protein bL20 (118 aa).

This sequence belongs to the bacterial ribosomal protein bL20 family.

Functionally, binds directly to 23S ribosomal RNA and is necessary for the in vitro assembly process of the 50S ribosomal subunit. It is not involved in the protein synthesizing functions of that subunit. The polypeptide is Large ribosomal subunit protein bL20 (Psychrobacter arcticus (strain DSM 17307 / VKM B-2377 / 273-4)).